The primary structure comprises 333 residues: Probable tRNA pseudouridine synthase B (333 aa).

Asp-66 (nucleophile) is an active-site residue. A PUA domain is found at 233–308 (LKKIIVKDSA…EVVEITRVIM (76 aa)).

This sequence belongs to the pseudouridine synthase TruB family. Type 2 subfamily.

The enzyme catalyses uridine(55) in tRNA = pseudouridine(55) in tRNA. Functionally, could be responsible for synthesis of pseudouridine from uracil-55 in the psi GC loop of transfer RNAs. The protein is Probable tRNA pseudouridine synthase B of Methanococcus maripaludis (strain C7 / ATCC BAA-1331).